The primary structure comprises 285 residues: Non-homologous end joining protein Ku (285 aa).

A Ku domain is found at 9–176 (ISFGLVNVPV…PAEIRHLEAS (168 aa)). The disordered stretch occupies residues 250–285 (AMTDQKKQQNTAESETEEKPTKSTLTPRGRRKVKGA).

It belongs to the prokaryotic Ku family. As to quaternary structure, homodimer. Interacts with LigD.

Its function is as follows. With LigD forms a non-homologous end joining (NHEJ) DNA repair enzyme, which repairs dsDNA breaks with reduced fidelity. Binds linear dsDNA with 5'- and 3'- overhangs but not closed circular dsDNA nor ssDNA. Recruits and stimulates the ligase activity of LigD. This is Non-homologous end joining protein Ku from Desulfitobacterium hafniense (strain DSM 10664 / DCB-2).